Reading from the N-terminus, the 615-residue chain is ATP-dependent RNA helicase DBP9 (615 aa).

The segment at 1 to 37 (MSASTKRKRDQAEESVPAENPASTDVEKAIKPAQKQE) is disordered. Positions 25 to 37 (DVEKAIKPAQKQE) are enriched in basic and acidic residues. Residues 40–68 (TSFVDLGLDPRLLQAIAQQKFAKPTLVQR) carry the Q motif motif. A Helicase ATP-binding domain is found at 71–248 (IPLALNGQDV…GIFRRDPTLL (178 aa)). 84–91 (ADCGSGKT) is an ATP binding site. Residues 196–199 (DEAD) carry the DEAD box motif. The 233-residue stretch at 259–491 (GITQFVAKCG…PYNFNMKQVD (233 aa)) folds into the Helicase C-terminal domain. Positions 351–363 (GDDEEPAETAEAQ) are enriched in acidic residues. Disordered stretches follow at residues 351-396 (GDDE…DKEY) and 583-615 (KDKK…RKTK). Over residues 583–594 (KDKKGKGKKGRG) the composition is skewed to basic residues.

Belongs to the DEAD box helicase family. DDX56/DBP9 subfamily.

The protein resides in the nucleus. Its subcellular location is the nucleolus. The enzyme catalyses ATP + H2O = ADP + phosphate + H(+). ATP-binding RNA helicase involved in the biogenesis of 60S ribosomal subunits and is required for the normal formation of 25S and 5.8S rRNAs. The protein is ATP-dependent RNA helicase DBP9 (DBP9) of Gibberella zeae (strain ATCC MYA-4620 / CBS 123657 / FGSC 9075 / NRRL 31084 / PH-1) (Wheat head blight fungus).